The following is a 212-amino-acid chain: ATP-dependent dethiobiotin synthetase BioD (212 aa).

13–18 (GIGKTV) contributes to the ATP binding site. Mg(2+) is bound at residue Thr-17. Residue Lys-33 is part of the active site. Ser-37 provides a ligand contact to substrate. Residue Glu-100 participates in Mg(2+) binding. ATP-binding positions include 100 to 103 (EGAG) and 184 to 186 (PRL).

It belongs to the dethiobiotin synthetase family. In terms of assembly, homodimer. Mg(2+) serves as cofactor.

The protein localises to the cytoplasm. The enzyme catalyses (7R,8S)-7,8-diammoniononanoate + CO2 + ATP = (4R,5S)-dethiobiotin + ADP + phosphate + 3 H(+). It participates in cofactor biosynthesis; biotin biosynthesis; biotin from 7,8-diaminononanoate: step 1/2. Catalyzes a mechanistically unusual reaction, the ATP-dependent insertion of CO2 between the N7 and N8 nitrogen atoms of 7,8-diaminopelargonic acid (DAPA, also called 7,8-diammoniononanoate) to form a ureido ring. In Brucella anthropi (strain ATCC 49188 / DSM 6882 / CCUG 24695 / JCM 21032 / LMG 3331 / NBRC 15819 / NCTC 12168 / Alc 37) (Ochrobactrum anthropi), this protein is ATP-dependent dethiobiotin synthetase BioD.